A 94-amino-acid chain; its full sequence is Co-chaperonin GroES (94 aa).

This sequence belongs to the GroES chaperonin family. Heptamer of 7 subunits arranged in a ring. Interacts with the chaperonin GroEL.

The protein localises to the cytoplasm. Together with the chaperonin GroEL, plays an essential role in assisting protein folding. The GroEL-GroES system forms a nano-cage that allows encapsulation of the non-native substrate proteins and provides a physical environment optimized to promote and accelerate protein folding. GroES binds to the apical surface of the GroEL ring, thereby capping the opening of the GroEL channel. This Streptococcus pneumoniae (strain ATCC 700669 / Spain 23F-1) protein is Co-chaperonin GroES.